Reading from the N-terminus, the 134-residue chain is Large ribosomal subunit protein eL14z (134 aa).

Belongs to the eukaryotic ribosomal protein eL14 family.

This chain is Large ribosomal subunit protein eL14z (RPL14A), found in Arabidopsis thaliana (Mouse-ear cress).